We begin with the raw amino-acid sequence, 86 residues long: Large ribosomal subunit protein bL31 (86 aa).

It belongs to the bacterial ribosomal protein bL31 family. Type A subfamily. As to quaternary structure, part of the 50S ribosomal subunit.

In terms of biological role, binds the 23S rRNA. In Parasynechococcus marenigrum (strain WH8102), this protein is Large ribosomal subunit protein bL31.